Here is a 507-residue protein sequence, read N- to C-terminus: RNA-splicing ligase RtcB homolog (507 aa).

Positions 121, 124, 229, 261, and 355 each coordinate Mn(2+). 228–232 provides a ligand contact to GMP; it reads NHYAE. Residues 355 to 356, 404 to 407, Ser411, 430 to 433, and Lys506 contribute to the GMP site; these read HN, GGTM, and HGAG. The active-site GMP-histidine intermediate is the His430.

It belongs to the RtcB family. In terms of assembly, catalytic component of the tRNA-splicing ligase complex. Mn(2+) serves as cofactor.

The enzyme catalyses a 3'-end 3'-phospho-ribonucleotide-RNA + a 5'-end dephospho-ribonucleoside-RNA + GTP = a ribonucleotidyl-ribonucleotide-RNA + GMP + diphosphate. It carries out the reaction a 3'-end 2',3'-cyclophospho-ribonucleotide-RNA + a 5'-end dephospho-ribonucleoside-RNA + GTP + H2O = a ribonucleotidyl-ribonucleotide-RNA + GMP + diphosphate + H(+). Its function is as follows. Catalytic subunit of the tRNA-splicing ligase complex that acts by directly joining spliced tRNA halves to mature-sized tRNAs by incorporating the precursor-derived splice junction phosphate into the mature tRNA as a canonical 3',5'-phosphodiester. May act as an RNA ligase with broad substrate specificity, and may function toward other RNAs. This is RNA-splicing ligase RtcB homolog from Micromonas pusilla (strain CCMP1545) (Picoplanktonic green alga).